A 402-amino-acid chain; its full sequence is Phosphomevalonate dehydratase large subunit (402 aa).

Gly48, Ala49, Ser50, Asn79, and Pro80 together coordinate (R)-5-phosphomevalonate. A [4Fe-4S] cluster-binding site is contributed by Cys122. Residues Glu145 and Ser146 each contribute to the (R)-5-phosphomevalonate site. Residues Cys297 and Cys356 each contribute to the [4Fe-4S] cluster site. Lys377 serves as a coordination point for (R)-5-phosphomevalonate.

The protein belongs to the AcnX type II large subunit family. As to quaternary structure, heterodimer composed of a large subunit (PMDh-L) and a small subunit (PMDh-S). Requires [4Fe-4S] cluster as cofactor.

The enzyme catalyses (R)-5-phosphomevalonate = (2E)-3-methyl-5-phosphooxypent-2-enoate + H2O. The protein operates within isoprenoid biosynthesis; isopentenyl diphosphate biosynthesis via mevalonate pathway. Neither the addition of 1 mM Mg(2+) nor 1 mM Mn(2+) has a significant effect on the activity, whereas Zn(2+) causes almost complete inactivation. Strongly inhibited by H(2)O(2), but not by EDTA or iodoacetamide. Component of a hydro-lyase that catalyzes the dehydration of mevalonate 5-phosphate (MVA5P) to form trans-anhydromevalonate 5-phosphate (tAHMP). Involved in the archaeal mevalonate (MVA) pathway, which provides fundamental precursors for isoprenoid biosynthesis, such as isopentenyl diphosphate (IPP) and dimethylallyl diphosphate (DMAPP). In Aeropyrum pernix (strain ATCC 700893 / DSM 11879 / JCM 9820 / NBRC 100138 / K1), this protein is Phosphomevalonate dehydratase large subunit.